A 232-amino-acid chain; its full sequence is Aprataxin-like protein (232 aa).

The region spanning 38 to 160 (LKVYIESPES…MTLDHVSPSL (123 aa)) is the HIT domain. Interaction with DNA regions lie at residues 63–67 (DMFPK), 138–149 (HAGPSMNNLHLH), and 161–165 (KNSAH). Residue His147 is the Nucleophile of the active site. Zn(2+) contacts are provided by Cys200 and Cys203. An interaction with DNA region spans residues 209 to 212 (RHFT). Positions 217 and 221 each coordinate Zn(2+).

In terms of assembly, monomer.

It localises to the nucleus. The protein resides in the cytoplasm. The catalysed reaction is a 5'-end adenosine-5'-diphospho-5'-2'-deoxyribonucleoside-DNA + H2O = a 5'-end 5'-phospho-2'-deoxyribonucleoside-DNA + AMP + 2 H(+). It catalyses the reaction a 5'-end adenosine-5'-diphospho-5'-ribonucleoside-2'-deoxyribonucleotide-DNA + H2O = a 5'-end 5'-phospho-ribonucleoside-2'-deoxyribonucleotide-DNA + AMP + 2 H(+). It carries out the reaction a 3'-end 2'-deoxyribonucleotide-3'-diphospho-5'-guanosine-DNA + H2O = a 3'-end 2'-deoxyribonucleotide 3'-phosphate-DNA + GMP + 2 H(+). Its function is as follows. DNA-binding protein involved in single-strand DNA break repair, double-strand DNA break repair and base excision repair. Resolves abortive DNA ligation intermediates formed either at base excision sites, or when DNA ligases attempt to repair non-ligatable breaks induced by reactive oxygen species. Catalyzes the release of adenylate groups covalently linked to 5'-phosphate termini, resulting in the production of 5'-phosphate termini that can be efficiently rejoined. Likewise, catalyzes the release of 3'-linked guanosine (DNAppG) and inosine (DNAppI) from DNA, but has higher specific activity with 5'-linked adenosine (AppDNA). The polypeptide is Aprataxin-like protein (hnt3) (Schizosaccharomyces pombe (strain 972 / ATCC 24843) (Fission yeast)).